Here is an 856-residue protein sequence, read N- to C-terminus: Leucine--tRNA ligase (856 aa).

Residues 42–52 (PYPSGKLHMGH) carry the 'HIGH' region motif. Positions 615–619 (KMSKS) match the 'KMSKS' region motif. Lysine 618 provides a ligand contact to ATP.

Belongs to the class-I aminoacyl-tRNA synthetase family.

The protein resides in the cytoplasm. The enzyme catalyses tRNA(Leu) + L-leucine + ATP = L-leucyl-tRNA(Leu) + AMP + diphosphate. The sequence is that of Leucine--tRNA ligase from Chromohalobacter salexigens (strain ATCC BAA-138 / DSM 3043 / CIP 106854 / NCIMB 13768 / 1H11).